A 218-amino-acid polypeptide reads, in one-letter code: Small ribosomal subunit protein uS3 (218 aa).

Residues 38–106 (IREYISKRLQ…RVHINIVEIK (69 aa)) enclose the KH type-2 domain.

It belongs to the universal ribosomal protein uS3 family. In terms of assembly, part of the 30S ribosomal subunit. Forms a tight complex with proteins S10 and S14.

In terms of biological role, binds the lower part of the 30S subunit head. Binds mRNA in the 70S ribosome, positioning it for translation. The chain is Small ribosomal subunit protein uS3 from Geobacillus kaustophilus (strain HTA426).